The chain runs to 451 residues: Proline--tRNA ligase (451 aa).

The protein belongs to the class-II aminoacyl-tRNA synthetase family. ProS type 2 subfamily. In terms of assembly, homodimer.

The protein localises to the cytoplasm. The catalysed reaction is tRNA(Pro) + L-proline + ATP = L-prolyl-tRNA(Pro) + AMP + diphosphate. In terms of biological role, catalyzes the attachment of proline to tRNA(Pro) in a two-step reaction: proline is first activated by ATP to form Pro-AMP and then transferred to the acceptor end of tRNA(Pro). The polypeptide is Proline--tRNA ligase (Roseobacter denitrificans (strain ATCC 33942 / OCh 114) (Erythrobacter sp. (strain OCh 114))).